Consider the following 380-residue polypeptide: MTSLPLTPVNLDAPARRAAMPPRHLADLDLAGRQALVAELGEPRFRARQVSTHYFGRLVRDSGQMTDLPAAAREKLTDRLLPTLLTPVRELTCDDGATHKALWRLHDGSLVESVLMGYPDRVTACLSSQAGCGMACPFCATGQAGLTRNLSTAEIVDQAVYLAGVAASGAVAGSPPRLSRVVFMGMGEPLANYNRVVAAIRRLVAPAPEGLGLSQRHVTVSTVGLVPAIRRLASEDLSVTLALSLHAPDDGLRDELVPVNQRWKVSEVLETAWEYAARTGRRVSIEYAMIKDVNDQPWRADLLGRLLAGKLAHVNLIPLNPTPGSRWDASPKPVEREFVRRLRDAGVSTTVRDTRGREIDGACGQLAAAEGDEIVGPGAP.

E112 serves as the catalytic Proton acceptor. The 241-residue stretch at 118-358 (YPDRVTACLS…TTVRDTRGRE (241 aa)) folds into the Radical SAM core domain. C125 and C363 are oxidised to a cystine. [4Fe-4S] cluster-binding residues include C132, C136, and C139. S-adenosyl-L-methionine-binding positions include 187–188 (GE), S221, 244–246 (SLH), and N320. C363 acts as the S-methylcysteine intermediate in catalysis.

It belongs to the radical SAM superfamily. RlmN family. The cofactor is [4Fe-4S] cluster.

The protein resides in the cytoplasm. It catalyses the reaction adenosine(2503) in 23S rRNA + 2 reduced [2Fe-2S]-[ferredoxin] + 2 S-adenosyl-L-methionine = 2-methyladenosine(2503) in 23S rRNA + 5'-deoxyadenosine + L-methionine + 2 oxidized [2Fe-2S]-[ferredoxin] + S-adenosyl-L-homocysteine. The enzyme catalyses adenosine(37) in tRNA + 2 reduced [2Fe-2S]-[ferredoxin] + 2 S-adenosyl-L-methionine = 2-methyladenosine(37) in tRNA + 5'-deoxyadenosine + L-methionine + 2 oxidized [2Fe-2S]-[ferredoxin] + S-adenosyl-L-homocysteine. Functionally, specifically methylates position 2 of adenine 2503 in 23S rRNA and position 2 of adenine 37 in tRNAs. In Salinispora arenicola (strain CNS-205), this protein is Probable dual-specificity RNA methyltransferase RlmN.